Consider the following 345-residue polypeptide: Galacturonate transporter (345 aa).

The signal sequence occupies residues 1-32 (MFKIKGLRWYMIGLVTIGTVLGYLTRNAIAAA). The next 8 helical transmembrane spans lie at 49–69 (YIIAAYSACYTIMQPVAGYVL), 76–96 (VGYAMFAILWALFCAGTALAN), 100–120 (GLAVARGAVGMAEAAMIPAGL), 139–159 (FNVGSSIGGMLAPPLVVWAIM), 165–185 (MAFLITGALSLVWALCWLYFY), 237–257 (FLAEPAWGTFNAWIPLFMFKA), 265–285 (IAMFAWMPMLFADLGCILGGY), and 304–324 (LVVTLGALLMIGPGTIGLFTS).

It belongs to the major facilitator superfamily. Phthalate permease family.

The protein localises to the cell inner membrane. It carries out the reaction aldehydo-D-galacturonate(out) + H(+)(out) = aldehydo-D-galacturonate(in) + H(+)(in). Inhibited by cyanide and 2,4-dinitrophenol, but not by arsenate. Transport of D-galacturonate. Cannot transport the dimer digalacturonic acid. Uptake is an active process. The protein is Galacturonate transporter of Dickeya chrysanthemi (Pectobacterium chrysanthemi).